We begin with the raw amino-acid sequence, 362 residues long: Dihydroorotate dehydrogenase (quinone) (362 aa).

FMN-binding positions include 62–66 and T86; that span reads AGYDK. Residue K66 participates in substrate binding. Residue 111 to 115 participates in substrate binding; sequence NRLGF. Residues N139 and N170 each contribute to the FMN site. N170 contributes to the substrate binding site. Residue S173 is the Nucleophile of the active site. Substrate is bound at residue N175. Residues K215 and S243 each coordinate FMN. 244 to 245 is a binding site for substrate; it reads NT. FMN contacts are provided by residues G266, G295, and 316-317; that span reads YS.

It belongs to the dihydroorotate dehydrogenase family. Type 2 subfamily. In terms of assembly, monomer. FMN is required as a cofactor.

Its subcellular location is the cell membrane. It carries out the reaction (S)-dihydroorotate + a quinone = orotate + a quinol. Its pathway is pyrimidine metabolism; UMP biosynthesis via de novo pathway; orotate from (S)-dihydroorotate (quinone route): step 1/1. Functionally, catalyzes the conversion of dihydroorotate to orotate with quinone as electron acceptor. The polypeptide is Dihydroorotate dehydrogenase (quinone) (Rhizobium etli (strain ATCC 51251 / DSM 11541 / JCM 21823 / NBRC 15573 / CFN 42)).